Consider the following 424-residue polypeptide: MASMPPTPEAQGPILFEDLAVYFSQEECVTLHPAQRSLSKDGTKESLEDAALMGEEGKPEINQQLSLESMELDELALEKYPIAAPLVPYPEKSSEDGVGNPEAKILSGTPTYKRRVISLLVTIENHTPLVELSEYLGTNTLSEILDSPWEGAKNVYKCPECDQNFSDHSYLVLHQKIHSGEKKHKCGDCGKIFNHRANLRTHRRIHTGEKPYKCAKCSASFRQHSHLSRHMNSHVKEKPYTCSICGRGFMWLPGLAQHQKSHSAENTYESTNCDKHFNEKPNLALPEETFVSGPQYQHTKCMKSFRQSLYPALSEKSHDEDSERCSDDGDNFFSFSKFKPLQCPDCDMTFPCFSELISHQNIHTEERPHKCKTCEESFALDSELACHQKSHMLAEPFKCTVCGKTFKSNLHLITHKRTHIKNTT.

The region spanning 14–88 (ILFEDLAVYF…KYPIAAPLVP (75 aa)) is the KRAB domain. C2H2-type zinc fingers lie at residues 156 to 178 (YKCPECDQNFSDHSYLVLHQKIH), 184 to 206 (HKCGDCGKIFNHRANLRTHRRIH), 212 to 234 (YKCAKCSASFRQHSHLSRHMNSH), and 240 to 262 (YTCSICGRGFMWLPGLAQHQKSH). Lysine 300 is covalently cross-linked (Glycyl lysine isopeptide (Lys-Gly) (interchain with G-Cter in SUMO2)). C2H2-type zinc fingers lie at residues 341–363 (LQCPDCDMTFPCFSELISHQNIH), 369–391 (HKCKTCEESFALDSELACHQKSH), and 397–419 (FKCTVCGKTFKSNLHLITHKRTH).

This sequence belongs to the krueppel C2H2-type zinc-finger protein family.

The protein localises to the nucleus. May be involved in transcriptional regulation. This Homo sapiens (Human) protein is Zinc finger protein 597 (ZNF597).